Here is a 537-residue protein sequence, read N- to C-terminus: CTP synthase (537 aa).

Positions 1-265 (MTKYIFVTGG…GKYLTKRLKL (265 aa)) are amidoligase domain. Serine 13 is a CTP binding site. Serine 13 is a binding site for UTP. Residue 14-19 (GLGKGI) participates in ATP binding. Tyrosine 54 serves as a coordination point for L-glutamine. An ATP-binding site is contributed by aspartate 71. Residues aspartate 71 and glutamate 139 each contribute to the Mg(2+) site. Residues 146–148 (DIE), 186–191 (KTKPTQ), and lysine 222 contribute to the CTP site. Residues 186 to 191 (KTKPTQ) and lysine 222 each bind UTP. Positions 290–532 (EIAIVGKYVK…VRAAKEYKQE (243 aa)) constitute a Glutamine amidotransferase type-1 domain. Glycine 351 serves as a coordination point for L-glutamine. The Nucleophile; for glutamine hydrolysis role is filled by cysteine 378. L-glutamine is bound by residues 379-382 (FGFQ), glutamate 402, and arginine 459. Catalysis depends on residues histidine 505 and glutamate 507.

It belongs to the CTP synthase family. Homotetramer.

It catalyses the reaction UTP + L-glutamine + ATP + H2O = CTP + L-glutamate + ADP + phosphate + 2 H(+). It carries out the reaction L-glutamine + H2O = L-glutamate + NH4(+). The enzyme catalyses UTP + NH4(+) + ATP = CTP + ADP + phosphate + 2 H(+). The protein operates within pyrimidine metabolism; CTP biosynthesis via de novo pathway; CTP from UDP: step 2/2. Its activity is regulated as follows. Allosterically activated by GTP, when glutamine is the substrate; GTP has no effect on the reaction when ammonia is the substrate. The allosteric effector GTP functions by stabilizing the protein conformation that binds the tetrahedral intermediate(s) formed during glutamine hydrolysis. Inhibited by the product CTP, via allosteric rather than competitive inhibition. Functionally, catalyzes the ATP-dependent amination of UTP to CTP with either L-glutamine or ammonia as the source of nitrogen. Regulates intracellular CTP levels through interactions with the four ribonucleotide triphosphates. The sequence is that of CTP synthase from Pyrococcus furiosus (strain ATCC 43587 / DSM 3638 / JCM 8422 / Vc1).